The sequence spans 378 residues: 3,6-diketocamphane 1,6-monooxygenase (378 aa).

Residues H10, S44, M76, and T201 to S209 contribute to the FMN site.

The protein belongs to the bacterial luciferase oxidoreductase family. As to quaternary structure, homodimer. Likely forms a loose transient complex with a P.putida flavin reductase that provides the required FMNH(2) to the enzyme.

It carries out the reaction (1S,4S)-bornane-2,5-dione + FMNH2 + O2 = (1S,4S)-5-oxo-1,2-campholide + FMN + H2O + H(+). Involved in the degradation and assimilation of (-)-camphor, which allows P.putida strain NCIMB 10007 to grow on this enantiomer of camphor as the sole carbon source. Catalyzes the FMNH(2)-dependent lactonization of 3,6-diketocamphane via a Baeyer-Villiger oxidation to produce the unstable lactone 5-oxo-1,2-campholide with (S,S) configuration, that presumably undergoes spontaneous hydrolysis to form 2-oxo-Delta(3)-4,5,5-trimethylcyclopentenylacetate. Is also able to convert (-)-camphor to the corresponding lactone in vitro. Shows no conversion of (+)-camphor, (+)-fenchone, (-)-fenchone, and (+)-nopinone. Acts on other bicyclic ketones but very poorly on a few 2- and 4-substituted monocyclic ketones. This Pseudomonas putida (Arthrobacter siderocapsulatus) protein is 3,6-diketocamphane 1,6-monooxygenase.